Consider the following 366-residue polypeptide: tRNA-specific 2-thiouridylase MnmA (366 aa).

Residues 6-13 and Leu-32 each bind ATP; that span reads AMSGGVDS. Cys-101 acts as the Nucleophile in catalysis. A disulfide bridge connects residues Cys-101 and Cys-199. Residue Gly-125 coordinates ATP. Residues 148-150 are interaction with tRNA; that stretch reads KDQ. Catalysis depends on Cys-199, which acts as the Cysteine persulfide intermediate.

It belongs to the MnmA/TRMU family.

The protein resides in the cytoplasm. It carries out the reaction S-sulfanyl-L-cysteinyl-[protein] + uridine(34) in tRNA + AH2 + ATP = 2-thiouridine(34) in tRNA + L-cysteinyl-[protein] + A + AMP + diphosphate + H(+). Functionally, catalyzes the 2-thiolation of uridine at the wobble position (U34) of tRNA, leading to the formation of s(2)U34. The protein is tRNA-specific 2-thiouridylase MnmA of Leifsonia xyli subsp. xyli (strain CTCB07).